Reading from the N-terminus, the 552-residue chain is Leucine-rich repeat-containing protein 31 (552 aa).

Residues 1-65 form a disordered region; sequence MSQTRKKTSS…SETAKPLSSE (65 aa). The span at 31–41 shows a compositional bias: basic and acidic residues; that stretch reads ESRKEDNDLKT. Polar residues predominate over residues 42–58; sequence SDSQPSDWIQKTATSET. LRR repeat units follow at residues 227–246, 255–275, 283–293, 311–331, 339–360, 367–387, 395–415, 423–443, and 453–475; these read SLEV…LNSI, NLKV…KILD, ELRKLDLSCNK, HLQV…MSLT, NLQE…NLLS, ALKS…TALA, ALEV…KLLL, SLQV…ALLA, and KLQK…MFCQ.

The chain is Leucine-rich repeat-containing protein 31 (LRRC31) from Homo sapiens (Human).